The chain runs to 143 residues: Large ribosomal subunit protein uL13 (143 aa).

The protein belongs to the universal ribosomal protein uL13 family. As to quaternary structure, part of the 50S ribosomal subunit.

Its function is as follows. This protein is one of the early assembly proteins of the 50S ribosomal subunit, although it is not seen to bind rRNA by itself. It is important during the early stages of 50S assembly. The chain is Large ribosomal subunit protein uL13 from Geobacter sulfurreducens (strain ATCC 51573 / DSM 12127 / PCA).